The sequence spans 750 residues: Photosystem I P700 chlorophyll a apoprotein A1 (750 aa).

Helical transmembrane passes span 70–93 (VFSAHFGQLSIIFLWLSGMYFHGA), 156–179 (LYCTAIGALVFAALMLFAGWFHYH), 195–219 (LNHHLAGLLGLGSLSWAGHQVHVSL), 291–309 (IAHHHLAIAILFLIAGHMY), 346–369 (WHAQLALNLAMLGSLTIVVAHHMY), 385–411 (LSLFTHHMWIGGFLIVGAAAHAAIFMV), 433–455 (AIISHLNWVCIFLGFHSFGLYIH), and 531–549 (FLVHHIHAFTIHVTVLILL). [4Fe-4S] cluster is bound by residues Cys573 and Cys582. The next 2 membrane-spanning stretches (helical) occupy residues 589-610 (HVFLGLFWMYNAISVVIFHFSW) and 664-686 (LSAYGLFFLGAHFVWAFSLMFLF). His675 contacts chlorophyll a'. Chlorophyll a contacts are provided by Met683 and Tyr691. Trp692 serves as a coordination point for phylloquinone. Residues 724-744 (AVGVTHYLLGGIATTWAFFLA) form a helical membrane-spanning segment.

It belongs to the PsaA/PsaB family. In terms of assembly, the PsaA/B heterodimer binds the P700 chlorophyll special pair and subsequent electron acceptors. PSI consists of a core antenna complex that captures photons, and an electron transfer chain that converts photonic excitation into a charge separation. The eukaryotic PSI reaction center is composed of at least 11 subunits. P700 is a chlorophyll a/chlorophyll a' dimer, A0 is one or more chlorophyll a, A1 is one or both phylloquinones and FX is a shared 4Fe-4S iron-sulfur center. serves as cofactor.

It localises to the plastid. It is found in the chloroplast thylakoid membrane. It catalyses the reaction reduced [plastocyanin] + hnu + oxidized [2Fe-2S]-[ferredoxin] = oxidized [plastocyanin] + reduced [2Fe-2S]-[ferredoxin]. In terms of biological role, psaA and PsaB bind P700, the primary electron donor of photosystem I (PSI), as well as the electron acceptors A0, A1 and FX. PSI is a plastocyanin-ferredoxin oxidoreductase, converting photonic excitation into a charge separation, which transfers an electron from the donor P700 chlorophyll pair to the spectroscopically characterized acceptors A0, A1, FX, FA and FB in turn. Oxidized P700 is reduced on the lumenal side of the thylakoid membrane by plastocyanin. In Nymphaea alba (White water-lily), this protein is Photosystem I P700 chlorophyll a apoprotein A1.